Consider the following 547-residue polypeptide: Glucose-6-phosphate isomerase (547 aa).

E353 (proton donor) is an active-site residue. Active-site residues include H384 and K512.

Belongs to the GPI family.

It is found in the cytoplasm. It carries out the reaction alpha-D-glucose 6-phosphate = beta-D-fructose 6-phosphate. It functions in the pathway carbohydrate biosynthesis; gluconeogenesis. Its pathway is carbohydrate degradation; glycolysis; D-glyceraldehyde 3-phosphate and glycerone phosphate from D-glucose: step 2/4. Functionally, catalyzes the reversible isomerization of glucose-6-phosphate to fructose-6-phosphate. The polypeptide is Glucose-6-phosphate isomerase (Pseudoalteromonas atlantica (strain T6c / ATCC BAA-1087)).